A 144-amino-acid polypeptide reads, in one-letter code: Snake venom vascular endothelial growth factor toxin cratrin (144 aa).

An N-terminal signal peptide occupies residues 1-24 (MAVYLLAVAILFCIQGWPSGTVQG). Glutamine 25 carries the pyrrolidone carboxylic acid modification. Disulfide bonds link cysteine 38–cysteine 80, cysteine 69–cysteine 115, and cysteine 73–cysteine 117. Residues 119-144 (PRSTVNNGKRKKNPKEGEPRAKFPLV) are disordered. Residues 132-144 (PKEGEPRAKFPLV) show a composition bias toward basic and acidic residues.

The protein belongs to the PDGF/VEGF growth factor family. Snake venom VEGF subfamily. As to quaternary structure, homodimer; disulfide-linked. Interacts with VEGF receptor-1 (FLT1) with a high affinity, whereas it binds to VEGF receptor-2 (KDR) with a low affinity. Does not bind VEGF receptor-3 (FLT4). As to expression, expressed by the venom gland.

It is found in the secreted. In terms of biological role, snake venom VEGFs that may contribute to venom dispersion and prey subjugation by inducing vascular permeability and hypotension. This protein induces an increase in capillary permeability after intradermal injection, as well as a drastic hypotensive effect after intravenous injection. The hypotension is mediated by nitric oxide (NO), which is produced by VEGF-activated endothelium NO synthase. Also induces angiogenesis in vitro. Like other crotalid VEGFs, this protein interacts with VEGF receptor-1 (FLT1) with a high affinity, whereas it binds to VEGF receptor-2 (KDR) with a low affinity. The chain is Snake venom vascular endothelial growth factor toxin cratrin from Crotalus atrox (Western diamondback rattlesnake).